The primary structure comprises 730 residues: Ribosomal RNA large subunit methyltransferase K/L (730 aa).

In terms of domain architecture, THUMP spans 46–157 (TAYRLCVWSR…RGEAILSLDL (112 aa)). Positions 394 to 418 (GERREAQPEGTEARQQVPQASEPAR) are disordered.

Belongs to the methyltransferase superfamily. RlmKL family.

The protein localises to the cytoplasm. It catalyses the reaction guanosine(2445) in 23S rRNA + S-adenosyl-L-methionine = N(2)-methylguanosine(2445) in 23S rRNA + S-adenosyl-L-homocysteine + H(+). The enzyme catalyses guanosine(2069) in 23S rRNA + S-adenosyl-L-methionine = N(2)-methylguanosine(2069) in 23S rRNA + S-adenosyl-L-homocysteine + H(+). In terms of biological role, specifically methylates the guanine in position 2445 (m2G2445) and the guanine in position 2069 (m7G2069) of 23S rRNA. This Pseudomonas putida (strain ATCC 47054 / DSM 6125 / CFBP 8728 / NCIMB 11950 / KT2440) protein is Ribosomal RNA large subunit methyltransferase K/L.